The sequence spans 255 residues: MRHPLVMGNWKLNGSRHMVNELVANLRKELAGVTGCAVAIAPPDMYLDLAKHAADGSHIILGAQNVDVNLSGAFTGETSAEMLKDIGAKYIIIGHSERRTYHKESDEFIAKKFAVLKEQGLIPVLCIGETEAENEAGKTEEVCARQIDAVLKTQGAAAFEGAVIAYEPVWAIGTGKSATPAQAQAVHKFIRDHIAKADAKVAEQVIIQYGGSVNASNAAELFTQPDIDGALVGGASLKADAFAVIVKAAEAAKQA.

9 to 11 contacts substrate; it reads NWK. His95 serves as the catalytic Electrophile. Glu167 (proton acceptor) is an active-site residue. Substrate is bound by residues Gly173, Ser212, and 233–234; that span reads GG.

This sequence belongs to the triosephosphate isomerase family. As to quaternary structure, homodimer.

Its subcellular location is the cytoplasm. The enzyme catalyses D-glyceraldehyde 3-phosphate = dihydroxyacetone phosphate. It participates in carbohydrate biosynthesis; gluconeogenesis. Its pathway is carbohydrate degradation; glycolysis; D-glyceraldehyde 3-phosphate from glycerone phosphate: step 1/1. Functionally, involved in the gluconeogenesis. Catalyzes stereospecifically the conversion of dihydroxyacetone phosphate (DHAP) to D-glyceraldehyde-3-phosphate (G3P). The protein is Triosephosphate isomerase of Enterobacter cloacae.